The sequence spans 288 residues: Sulfur carrier protein FdhD (288 aa).

The disordered stretch occupies residues Met1 to His23. The active-site Cysteine persulfide intermediate is the Cys127.

Belongs to the FdhD family.

The protein resides in the cytoplasm. Required for formate dehydrogenase (FDH) activity. Acts as a sulfur carrier protein that transfers sulfur from IscS to the molybdenum cofactor prior to its insertion into FDH. The chain is Sulfur carrier protein FdhD from Cupriavidus necator (strain ATCC 17699 / DSM 428 / KCTC 22496 / NCIMB 10442 / H16 / Stanier 337) (Ralstonia eutropha).